Reading from the N-terminus, the 125-residue chain is Basic leucine zipper transcriptional factor ATF-like (125 aa).

Low complexity predominate over residues 1–14; the sequence is MPHSSDSSDSSFSR. The disordered stretch occupies residues 1-58; the sequence is MPHSSDSSDSSFSRSPPPGKQDSSDDVRRVQRREKNRIAAQKSRQRQTQKADTLHLES. The bZIP domain maps to 26-89; that stretch reads DVRRVQRREK…KYFTSVLNSH (64 aa). The segment at 28–50 is basic motif; sequence RRVQRREKNRIAAQKSRQRQTQK. The residue at position 43 (Ser-43) is a Phosphoserine. Position 48 is a phosphothreonine (Thr-48). Residues 54-75 are leucine-zipper; sequence LHLESEDLEKQNAALRKEIKQL.

The protein belongs to the bZIP family. As to quaternary structure, heterodimer; mainly heterodimerizes with JUNB. The BATF-JUNB heterodimer interacts with IRF4 and IRF8. Interacts (via bZIP domain) with IRF4 and IRF8; the interaction is direct. Also forms heterodimers with JUN and JUND. Also interacts with IFI35. Phosphorylated on serine and threonine residues and at least one tyrosine residue. Phosphorylation at Ser-43 inhibit DNA binding activity and transforms it as a negative regulator of AP-1 mediated transcription. In terms of processing, phosphorylated. Expressed at highest levels in lung, and at lower levels in placenta, liver, kidney, spleen, and peripheral blood. Detected in SW480 colorectal cancer cell line and several hematopoietic tumor cell lines, including Raji Burkitt's lymphoma. Strongly expressed in mature B- and T-lymphocytes. Also expressed in moderate levels in lymph node and appendix and at low levels in thymus and bone marrow.

It localises to the nucleus. The protein resides in the cytoplasm. In terms of biological role, AP-1 family transcription factor that controls the differentiation of lineage-specific cells in the immune system: specifically mediates the differentiation of T-helper 17 cells (Th17), follicular T-helper cells (TfH), CD8(+) dendritic cells and class-switch recombination (CSR) in B-cells. Acts via the formation of a heterodimer with JUNB that recognizes and binds DNA sequence 5'-TGA[CG]TCA-3'. The BATF-JUNB heterodimer also forms a complex with IRF4 (or IRF8) in immune cells, leading to recognition of AICE sequence (5'-TGAnTCA/GAAA-3'), an immune-specific regulatory element, followed by cooperative binding of BATF and IRF4 (or IRF8) and activation of genes. Controls differentiation of T-helper cells producing interleukin-17 (Th17 cells) by binding to Th17-associated gene promoters: regulates expression of the transcription factor RORC itself and RORC target genes such as IL17 (IL17A or IL17B). Also involved in differentiation of follicular T-helper cells (TfH) by directing expression of BCL6 and MAF. In B-cells, involved in class-switch recombination (CSR) by controlling the expression of both AICDA and of germline transcripts of the intervening heavy-chain region and constant heavy-chain region (I(H)-C(H)). Following infection, can participate in CD8(+) dendritic cell differentiation via interaction with IRF4 and IRF8 to mediate cooperative gene activation. Regulates effector CD8(+) T-cell differentiation by regulating expression of SIRT1. Following DNA damage, part of a differentiation checkpoint that limits self-renewal of hematopoietic stem cells (HSCs): up-regulated by STAT3, leading to differentiation of HSCs, thereby restricting self-renewal of HSCs. This is Basic leucine zipper transcriptional factor ATF-like (BATF) from Homo sapiens (Human).